Consider the following 461-residue polypeptide: UDP-N-acetylmuramoylalanine--D-glutamate ligase (461 aa).

115–121 contacts ATP; the sequence is GSNGKTT.

The protein belongs to the MurCDEF family.

It is found in the cytoplasm. The enzyme catalyses UDP-N-acetyl-alpha-D-muramoyl-L-alanine + D-glutamate + ATP = UDP-N-acetyl-alpha-D-muramoyl-L-alanyl-D-glutamate + ADP + phosphate + H(+). Its pathway is cell wall biogenesis; peptidoglycan biosynthesis. Functionally, cell wall formation. Catalyzes the addition of glutamate to the nucleotide precursor UDP-N-acetylmuramoyl-L-alanine (UMA). This is UDP-N-acetylmuramoylalanine--D-glutamate ligase from Acidobacterium capsulatum (strain ATCC 51196 / DSM 11244 / BCRC 80197 / JCM 7670 / NBRC 15755 / NCIMB 13165 / 161).